The primary structure comprises 151 residues: Large ribosomal subunit protein bL9 (151 aa).

The protein belongs to the bacterial ribosomal protein bL9 family.

Functionally, binds to the 23S rRNA. The protein is Large ribosomal subunit protein bL9 of Francisella tularensis subsp. novicida (strain U112).